A 917-amino-acid polypeptide reads, in one-letter code: Protein translocase subunit SecA (917 aa).

ATP-binding positions include Gln87, 105-109, and Asp516; that span reads GEGKT. Zn(2+) is bound by residues Cys901, Cys903, Cys912, and His913.

It belongs to the SecA family. Monomer and homodimer. Part of the essential Sec protein translocation apparatus which comprises SecA, SecYEG and auxiliary proteins SecDF-YajC and YidC. Requires Zn(2+) as cofactor.

Its subcellular location is the cell inner membrane. It localises to the cytoplasm. The catalysed reaction is ATP + H2O + cellular proteinSide 1 = ADP + phosphate + cellular proteinSide 2.. Functionally, part of the Sec protein translocase complex. Interacts with the SecYEG preprotein conducting channel. Has a central role in coupling the hydrolysis of ATP to the transfer of proteins into and across the cell membrane, serving both as a receptor for the preprotein-SecB complex and as an ATP-driven molecular motor driving the stepwise translocation of polypeptide chains across the membrane. In Verminephrobacter eiseniae (strain EF01-2), this protein is Protein translocase subunit SecA.